A 153-amino-acid chain; its full sequence is Transcriptional repressor NrdR (153 aa).

A zinc finger spans residues 3–34; the sequence is CPFCGKENTRVIDSRPADDCSSIRRRRQCDEC. The 91-residue stretch at 49–139 folds into the ATP-cone domain; sequence LVVIKKDNNR…VYREFKDVNT (91 aa).

This sequence belongs to the NrdR family. It depends on Zn(2+) as a cofactor.

Its function is as follows. Negatively regulates transcription of bacterial ribonucleotide reductase nrd genes and operons by binding to NrdR-boxes. The sequence is that of Transcriptional repressor NrdR from Lachnoclostridium phytofermentans (strain ATCC 700394 / DSM 18823 / ISDg) (Clostridium phytofermentans).